Reading from the N-terminus, the 388-residue chain is Probable ubiquitin-conjugating enzyme E2 L709 (388 aa).

Residues 3 to 162 (NVHKRVIKDI…GNDLMVQKLF (160 aa)) form the UBC core domain. C95 acts as the Glycyl thioester intermediate in catalysis. The interval 195–388 (VEEKSAKTSK…SSKSSKTGKK (194 aa)) is disordered. 2 stretches are compositionally biased toward acidic residues: residues 221-238 (SEEE…DSES) and 246-297 (DVVD…ESEE). Residues 310–388 (KTTTKSSSTK…SSKSSKTGKK (79 aa)) show a composition bias toward low complexity.

The protein belongs to the ubiquitin-conjugating enzyme family.

It catalyses the reaction S-ubiquitinyl-[E1 ubiquitin-activating enzyme]-L-cysteine + [E2 ubiquitin-conjugating enzyme]-L-cysteine = [E1 ubiquitin-activating enzyme]-L-cysteine + S-ubiquitinyl-[E2 ubiquitin-conjugating enzyme]-L-cysteine.. Its pathway is protein modification; protein ubiquitination. Functionally, catalyzes the covalent attachment of ubiquitin to other proteins. This Acanthamoeba polyphaga (Amoeba) protein is Probable ubiquitin-conjugating enzyme E2 L709.